A 381-amino-acid polypeptide reads, in one-letter code: Chaperone protein DnaJ (381 aa).

A J domain is found at 4-69; the sequence is DYYEILGVTR…QKRAAYDRFG (66 aa). The CR-type zinc finger occupies 135-213; it reads GKTAQINIPS…CQGTRRVEKN (79 aa). Zn(2+)-binding residues include cysteine 148, cysteine 151, cysteine 165, cysteine 168, cysteine 187, cysteine 190, cysteine 201, and cysteine 204. CXXCXGXG motif repeat units lie at residues 148–155, 165–172, 187–194, and 201–208; these read CDACEGSG, CGTCHGAG, CPVCHGRG, and CPKCQGTR.

It belongs to the DnaJ family. In terms of assembly, homodimer. Zn(2+) is required as a cofactor.

It localises to the cytoplasm. In terms of biological role, participates actively in the response to hyperosmotic and heat shock by preventing the aggregation of stress-denatured proteins and by disaggregating proteins, also in an autonomous, DnaK-independent fashion. Unfolded proteins bind initially to DnaJ; upon interaction with the DnaJ-bound protein, DnaK hydrolyzes its bound ATP, resulting in the formation of a stable complex. GrpE releases ADP from DnaK; ATP binding to DnaK triggers the release of the substrate protein, thus completing the reaction cycle. Several rounds of ATP-dependent interactions between DnaJ, DnaK and GrpE are required for fully efficient folding. Also involved, together with DnaK and GrpE, in the DNA replication of plasmids through activation of initiation proteins. This chain is Chaperone protein DnaJ, found in Bartonella henselae (strain ATCC 49882 / DSM 28221 / CCUG 30454 / Houston 1) (Rochalimaea henselae).